Here is an 833-residue protein sequence, read N- to C-terminus: Leucine--tRNA ligase (833 aa).

A 'HIGH' region motif is present at residues 41–52 (PYPSGAGLHVGH). The 'KMSKS' region signature appears at 610–614 (KMSKS). K613 serves as a coordination point for ATP.

This sequence belongs to the class-I aminoacyl-tRNA synthetase family.

The protein resides in the cytoplasm. The catalysed reaction is tRNA(Leu) + L-leucine + ATP = L-leucyl-tRNA(Leu) + AMP + diphosphate. This is Leucine--tRNA ligase from Streptococcus pyogenes serotype M28 (strain MGAS6180).